Reading from the N-terminus, the 360-residue chain is Protein Wnt-2 (360 aa).

A signal peptide spans 1–26 (MNAPLGGIWLWLPLLLTWLTPEVSSS). 11 disulfide bridges follow: Cys-76–Cys-87, Cys-127–Cys-135, Cys-137–Cys-157, Cys-206–Cys-220, Cys-208–Cys-215, Cys-278–Cys-309, Cys-294–Cys-304, Cys-308–Cys-348, Cys-324–Cys-339, Cys-326–Cys-336, and Cys-331–Cys-332. Ser-212 is lipidated: O-palmitoleoyl serine; by PORCN. N-linked (GlcNAc...) asparagine glycosylation is present at Asn-295.

It belongs to the Wnt family. Post-translationally, palmitoleoylation is required for efficient binding to frizzled receptors. Depalmitoleoylation leads to Wnt signaling pathway inhibition.

It is found in the secreted. The protein localises to the extracellular space. Its subcellular location is the extracellular matrix. In terms of biological role, ligand for members of the frizzled family of seven transmembrane receptors. Probable developmental protein. May be a signaling molecule which affects the development of discrete regions of tissues. Is likely to signal over only few cell diameters. The protein is Protein Wnt-2 (WNT2) of Eulemur macaco macaco (Black lemur).